A 387-amino-acid chain; its full sequence is Anhydro-N-acetylmuramic acid kinase (387 aa).

9–16 (GTSVDGID) lines the ATP pocket.

This sequence belongs to the anhydro-N-acetylmuramic acid kinase family.

It catalyses the reaction 1,6-anhydro-N-acetyl-beta-muramate + ATP + H2O = N-acetyl-D-muramate 6-phosphate + ADP + H(+). Its pathway is amino-sugar metabolism; 1,6-anhydro-N-acetylmuramate degradation. The protein operates within cell wall biogenesis; peptidoglycan recycling. In terms of biological role, catalyzes the specific phosphorylation of 1,6-anhydro-N-acetylmuramic acid (anhMurNAc) with the simultaneous cleavage of the 1,6-anhydro ring, generating MurNAc-6-P. Is required for the utilization of anhMurNAc either imported from the medium or derived from its own cell wall murein, and thus plays a role in cell wall recycling. The polypeptide is Anhydro-N-acetylmuramic acid kinase (Synechocystis sp. (strain ATCC 27184 / PCC 6803 / Kazusa)).